The sequence spans 315 residues: Ribosomal RNA small subunit methyltransferase H (315 aa).

S-adenosyl-L-methionine is bound by residues G61–H63, D80, F108, D124, and Q131. The interval P291–L315 is disordered. A compositionally biased stretch (basic residues) spans R301 to L315.

Belongs to the methyltransferase superfamily. RsmH family.

The protein localises to the cytoplasm. It catalyses the reaction cytidine(1402) in 16S rRNA + S-adenosyl-L-methionine = N(4)-methylcytidine(1402) in 16S rRNA + S-adenosyl-L-homocysteine + H(+). Its function is as follows. Specifically methylates the N4 position of cytidine in position 1402 (C1402) of 16S rRNA. This is Ribosomal RNA small subunit methyltransferase H from Crocosphaera subtropica (strain ATCC 51142 / BH68) (Cyanothece sp. (strain ATCC 51142)).